Consider the following 138-residue polypeptide: Large ribosomal subunit protein bL17 (138 aa).

Belongs to the bacterial ribosomal protein bL17 family. In terms of assembly, part of the 50S ribosomal subunit. Contacts protein L32.

The protein is Large ribosomal subunit protein bL17 of Solidesulfovibrio magneticus (strain ATCC 700980 / DSM 13731 / RS-1) (Desulfovibrio magneticus).